Reading from the N-terminus, the 193-residue chain is MGLTGTNTTLVAPQPKGILDPRTGKTVGSDDAFFNDLNGELSDKGFIVTSADALITWARTGSLMWMTFGLACCAVEMMHISMPRYDAERFGIAPRASPRQSDVMIVAGTLTNKMAPALRKVYDQMPEPRYVISMGSCANGGGYYHYSYSVVRGCDRVVPVDIYVPGCPPTAEALLYGILLLQKKIRRTGTIER.

[4Fe-4S] cluster contacts are provided by cysteine 72, cysteine 73, cysteine 137, and cysteine 167.

The protein belongs to the complex I 20 kDa subunit family. NDH-1 is composed of 14 different subunits. Subunits NuoB, C, D, E, F, and G constitute the peripheral sector of the complex. Requires [4Fe-4S] cluster as cofactor.

The protein resides in the cell inner membrane. The enzyme catalyses a quinone + NADH + 5 H(+)(in) = a quinol + NAD(+) + 4 H(+)(out). In terms of biological role, NDH-1 shuttles electrons from NADH, via FMN and iron-sulfur (Fe-S) centers, to quinones in the respiratory chain. Couples the redox reaction to proton translocation (for every two electrons transferred, four hydrogen ions are translocated across the cytoplasmic membrane), and thus conserves the redox energy in a proton gradient. The protein is NADH-quinone oxidoreductase subunit B of Brucella abortus (strain S19).